The sequence spans 538 residues: Bifunctional purine biosynthesis protein PurH (538 aa).

The 151-residue stretch at 8–158 folds into the MGS-like domain; the sequence is IPAPDKVQVK…KNHAYVTTLT (151 aa).

The protein belongs to the PurH family.

The catalysed reaction is (6R)-10-formyltetrahydrofolate + 5-amino-1-(5-phospho-beta-D-ribosyl)imidazole-4-carboxamide = 5-formamido-1-(5-phospho-D-ribosyl)imidazole-4-carboxamide + (6S)-5,6,7,8-tetrahydrofolate. The enzyme catalyses IMP + H2O = 5-formamido-1-(5-phospho-D-ribosyl)imidazole-4-carboxamide. Its pathway is purine metabolism; IMP biosynthesis via de novo pathway; 5-formamido-1-(5-phospho-D-ribosyl)imidazole-4-carboxamide from 5-amino-1-(5-phospho-D-ribosyl)imidazole-4-carboxamide (10-formyl THF route): step 1/1. The protein operates within purine metabolism; IMP biosynthesis via de novo pathway; IMP from 5-formamido-1-(5-phospho-D-ribosyl)imidazole-4-carboxamide: step 1/1. The polypeptide is Bifunctional purine biosynthesis protein PurH (Rhizobium rhizogenes (strain K84 / ATCC BAA-868) (Agrobacterium radiobacter)).